We begin with the raw amino-acid sequence, 253 residues long: Hydroxyacylglutathione hydrolase (253 aa).

7 residues coordinate Zn(2+): H54, H56, D58, H59, H112, D131, and H169.

It belongs to the metallo-beta-lactamase superfamily. Glyoxalase II family. Monomer. Zn(2+) is required as a cofactor.

The enzyme catalyses an S-(2-hydroxyacyl)glutathione + H2O = a 2-hydroxy carboxylate + glutathione + H(+). Its pathway is secondary metabolite metabolism; methylglyoxal degradation; (R)-lactate from methylglyoxal: step 2/2. In terms of biological role, thiolesterase that catalyzes the hydrolysis of S-D-lactoyl-glutathione to form glutathione and D-lactic acid. This Bartonella quintana (strain Toulouse) (Rochalimaea quintana) protein is Hydroxyacylglutathione hydrolase.